The primary structure comprises 285 residues: NAD kinase (285 aa).

The Proton acceptor role is filled by Asp-66. Residues Asp-66–Gly-67, Asn-137–Asp-138, Arg-148, Arg-165, Asp-167, and Thr-178–Ser-183 each bind NAD(+).

This sequence belongs to the NAD kinase family. A divalent metal cation serves as cofactor.

The protein resides in the cytoplasm. It carries out the reaction NAD(+) + ATP = ADP + NADP(+) + H(+). In terms of biological role, involved in the regulation of the intracellular balance of NAD and NADP, and is a key enzyme in the biosynthesis of NADP. Catalyzes specifically the phosphorylation on 2'-hydroxyl of the adenosine moiety of NAD to yield NADP. The sequence is that of NAD kinase from Prosthecochloris aestuarii (strain DSM 271 / SK 413).